Here is a 249-residue protein sequence, read N- to C-terminus: Small ribosomal subunit protein uS2 (249 aa).

It belongs to the universal ribosomal protein uS2 family.

This is Small ribosomal subunit protein uS2 from Polynucleobacter asymbioticus (strain DSM 18221 / CIP 109841 / QLW-P1DMWA-1) (Polynucleobacter necessarius subsp. asymbioticus).